The sequence spans 89 residues: Long neurotoxin homolog TA-bm16 (89 aa).

Residues 1-21 form the signal peptide; it reads MKTLLLTLVVVTIVCLDLGYT. 5 cysteine pairs are disulfide-bonded: Cys24/Cys45, Cys27/Cys32, Cys38/Cys66, Cys70/Cys81, and Cys82/Cys87.

Belongs to the three-finger toxin family. Ancestral subfamily. Orphan group V sub-subfamily. In terms of tissue distribution, expressed by the venom gland.

The protein localises to the secreted. Exhibits M2 muscarinic acetylcholine receptor (CHRM2)-blocking activity, but has a weak binding activity toward nicotinic AChR. Moreover, it inhibits collagen-induced platelet aggregation. The sequence is that of Long neurotoxin homolog TA-bm16 from Bungarus multicinctus (Many-banded krait).